Consider the following 238-residue polypeptide: MEESINPIISIGPVIFNLTMLAMTLLIVGVIFVFIYWASRNMTLKPKGKQNVLEYVYDFVIGFTEPNIGSRYMKDYSLFFLCLFLFMVIANNLGLMTKIQTIDGTNWWSSPTANLQYDLTLSFLVILLTHIESVRRRGFKKSIKSFMSPVFVIPMNILEEFTNFLSLALRIFGNIFAGEVMTSLLLLLSHQAIYWYPVAFGANLAWTAFSVFISCIQAYVFTLLTSVYLGNKINIEEE.

5 helical membrane-spanning segments follow: residues 15-35 (IFNL…FVFI), 76-96 (YSLF…LGLM), 111-131 (PTAN…LTHI), 167-187 (LALR…LLLL), and 208-230 (AFSV…VYLG).

It belongs to the ATPase A chain family. F-type ATPases have 2 components, CF(1) - the catalytic core - and CF(0) - the membrane proton channel. CF(1) has five subunits: alpha(3), beta(3), gamma(1), delta(1), epsilon(1). CF(0) has three main subunits: a(1), b(2) and c(9-12). The alpha and beta chains form an alternating ring which encloses part of the gamma chain. CF(1) is attached to CF(0) by a central stalk formed by the gamma and epsilon chains, while a peripheral stalk is formed by the delta and b chains.

The protein localises to the cell membrane. Functionally, key component of the proton channel; it plays a direct role in the translocation of protons across the membrane. This Streptococcus pneumoniae (strain 70585) protein is ATP synthase subunit a.